We begin with the raw amino-acid sequence, 284 residues long: NAD kinase (284 aa).

Aspartate 67 functions as the Proton acceptor in the catalytic mechanism. NAD(+) is bound by residues 67–68, 141–142, arginine 152, lysine 169, aspartate 171, 182–187, and glutamine 241; these read DG, ND, and TGYSLS.

It belongs to the NAD kinase family. The cofactor is a divalent metal cation.

It localises to the cytoplasm. It catalyses the reaction NAD(+) + ATP = ADP + NADP(+) + H(+). Its function is as follows. Involved in the regulation of the intracellular balance of NAD and NADP, and is a key enzyme in the biosynthesis of NADP. Catalyzes specifically the phosphorylation on 2'-hydroxyl of the adenosine moiety of NAD to yield NADP. The polypeptide is NAD kinase (Geotalea daltonii (strain DSM 22248 / JCM 15807 / FRC-32) (Geobacter daltonii)).